The chain runs to 396 residues: Ribosomal RNA large subunit methyltransferase I (396 aa).

In terms of domain architecture, PUA spans serine 2 to arginine 81.

Belongs to the methyltransferase superfamily. RlmI family.

Its subcellular location is the cytoplasm. It carries out the reaction cytidine(1962) in 23S rRNA + S-adenosyl-L-methionine = 5-methylcytidine(1962) in 23S rRNA + S-adenosyl-L-homocysteine + H(+). Functionally, specifically methylates the cytosine at position 1962 (m5C1962) of 23S rRNA. This chain is Ribosomal RNA large subunit methyltransferase I, found in Escherichia coli O1:K1 / APEC.